Here is a 130-residue protein sequence, read N- to C-terminus: Small ribosomal subunit protein uS9 (130 aa).

It belongs to the universal ribosomal protein uS9 family.

In Desulfovibrio desulfuricans (strain ATCC 27774 / DSM 6949 / MB), this protein is Small ribosomal subunit protein uS9.